A 560-amino-acid polypeptide reads, in one-letter code: Membrane protein insertase YidC (560 aa).

The next 6 membrane-spanning stretches (helical) occupy residues 5–25, 334–354, 357–377, 431–451, 476–496, and 522–542; these read IINL…WQYF, AIDF…MNFF, YVGN…LLMF, LPIL…YVTI, LFGL…WPIL, and FMPL…LIYW.

It belongs to the OXA1/ALB3/YidC family. Type 1 subfamily. In terms of assembly, interacts with the Sec translocase complex via SecD. Specifically interacts with transmembrane segments of nascent integral membrane proteins during membrane integration.

Its subcellular location is the cell inner membrane. Its function is as follows. Required for the insertion and/or proper folding and/or complex formation of integral membrane proteins into the membrane. Involved in integration of membrane proteins that insert both dependently and independently of the Sec translocase complex, as well as at least some lipoproteins. Aids folding of multispanning membrane proteins. The chain is Membrane protein insertase YidC from Rickettsia rickettsii (strain Iowa).